A 37-amino-acid chain; its full sequence is GILSLFTGGIKALGKTLFKMAGKAGAEHLACKATNQC.

Cys31 and Cys37 are disulfide-bonded.

In terms of tissue distribution, expressed by the skin glands.

The protein resides in the secreted. Functionally, antibacterial activity against Gram-positive bacterium S.aureus and Gram-negative bacterium E.coli. Has activity against C.albicans. In Rana luteiventris (Columbia spotted frog), this protein is Esculentin-2L.